The sequence spans 595 residues: Aspartate--tRNA ligase (595 aa).

L-aspartate is bound at residue Glu-171. The tract at residues 195-198 is aspartate; that stretch reads QLFK. Arg-217 contacts L-aspartate. ATP-binding positions include 217–219 and Gln-226; that span reads RDE. An L-aspartate-binding site is contributed by His-448. Glu-482 contributes to the ATP binding site. Arg-489 is a binding site for L-aspartate. Residue 534 to 537 participates in ATP binding; sequence GLDR.

The protein belongs to the class-II aminoacyl-tRNA synthetase family. Type 1 subfamily. In terms of assembly, homodimer.

It is found in the cytoplasm. It catalyses the reaction tRNA(Asp) + L-aspartate + ATP = L-aspartyl-tRNA(Asp) + AMP + diphosphate. Its function is as follows. Catalyzes the attachment of L-aspartate to tRNA(Asp) in a two-step reaction: L-aspartate is first activated by ATP to form Asp-AMP and then transferred to the acceptor end of tRNA(Asp). This chain is Aspartate--tRNA ligase, found in Erwinia tasmaniensis (strain DSM 17950 / CFBP 7177 / CIP 109463 / NCPPB 4357 / Et1/99).